The primary structure comprises 525 residues: GMP synthase [glutamine-hydrolyzing] (525 aa).

Residues 8–207 (KILILDFGSQ…ALDICGCAAN (200 aa)) form the Glutamine amidotransferase type-1 domain. Residue C85 is the Nucleophile of the active site. Catalysis depends on residues H181 and E183. The 193-residue stretch at 208 to 400 (WKPSSIIEDA…LGLPYNMLYR (193 aa)) folds into the GMPS ATP-PPase domain. 235 to 241 (SGGVDSS) lines the ATP pocket.

As to quaternary structure, homodimer.

The catalysed reaction is XMP + L-glutamine + ATP + H2O = GMP + L-glutamate + AMP + diphosphate + 2 H(+). The protein operates within purine metabolism; GMP biosynthesis; GMP from XMP (L-Gln route): step 1/1. Catalyzes the synthesis of GMP from XMP. This is GMP synthase [glutamine-hydrolyzing] from Shewanella baltica (strain OS223).